We begin with the raw amino-acid sequence, 145 residues long: Peptide methionine sulfoxide reductase MsrB (145 aa).

The MsrB domain maps to 4–127 (SDELKQRIGE…NSAALKFIPY (124 aa)). The active-site Nucleophile is Cys-116.

Belongs to the MsrB Met sulfoxide reductase family.

The catalysed reaction is L-methionyl-[protein] + [thioredoxin]-disulfide + H2O = L-methionyl-(R)-S-oxide-[protein] + [thioredoxin]-dithiol. The chain is Peptide methionine sulfoxide reductase MsrB from Streptococcus pyogenes serotype M3 (strain ATCC BAA-595 / MGAS315).